The chain runs to 911 residues: DNA ligase 4 (911 aa).

ATP-binding residues include Glu-271, Thr-272, Lys-273, Leu-274, Arg-278, Glu-331, Lys-345, Phe-367, Glu-427, Lys-432, Lys-449, and Lys-451. The N6-AMP-lysine intermediate role is filled by Lys-273. Residue Glu-331 participates in Mg(2+) binding. Glu-427 lines the Mg(2+) pocket. Residues 610–620 (LASKHFYVGGD) are required for catalytic activity. 2 BRCT domains span residues 654 to 743 (KISN…PHFM) and 808 to 911 (SPLS…QYLI).

It belongs to the ATP-dependent DNA ligase family. As to quaternary structure, interacts with XRCC4; the LIG4-XRCC4 subcomplex has a 1:2 stoichiometry and XRCC4 is required for LIG4 stability. Component of the core long-range non-homologous end joining (NHEJ) complex (also named DNA-PK complex) composed of PRKDC, LIG4, XRCC4, XRCC6/Ku70, XRCC5/Ku86 and NHEJ1/XLF. Additional component of the NHEJ complex includes PAXX. Following autophosphorylation, PRKDC dissociates from DNA, leading to formation of the short-range NHEJ complex, composed of LIG4, XRCC4, XRCC6/Ku70, XRCC5/Ku86 and NHEJ1/XLF. Interacts with DCLRE1C; the interaction is direct. Interacts with APLF. It depends on Mg(2+) as a cofactor.

The protein resides in the nucleus. The catalysed reaction is ATP + (deoxyribonucleotide)n-3'-hydroxyl + 5'-phospho-(deoxyribonucleotide)m = (deoxyribonucleotide)n+m + AMP + diphosphate.. In terms of biological role, DNA ligase involved in DNA non-homologous end joining (NHEJ); required for double-strand break (DSB) repair and V(D)J recombination. Catalyzes the NHEJ ligation step of the broken DNA during DSB repair by resealing the DNA breaks after the gap filling is completed. Joins single-strand breaks in a double-stranded polydeoxynucleotide in an ATP-dependent reaction. LIG4 is mechanistically flexible: it can ligate nicks as well as compatible DNA overhangs alone, while in the presence of XRCC4, it can ligate ends with 2-nucleotides (nt) microhomology and 1-nt gaps. Forms a subcomplex with XRCC4; the LIG4-XRCC4 subcomplex is responsible for the NHEJ ligation step and XRCC4 enhances the joining activity of LIG4. Binding of the LIG4-XRCC4 complex to DNA ends is dependent on the assembly of the DNA-dependent protein kinase complex DNA-PK to these DNA ends. LIG4 regulates nuclear localization of XRCC4. The protein is DNA ligase 4 of Pongo abelii (Sumatran orangutan).